We begin with the raw amino-acid sequence, 742 residues long: Ion-translocating oxidoreductase complex subunit C (742 aa).

2 4Fe-4S ferredoxin-type domains span residues 369–397 (GEPQEEQSCIRCSACADACPADLLPQQLY) and 407–436 (KATTHNIADCIECGACAWVCPSNIPLVQYF). Residues Cys-377, Cys-380, Cys-383, Cys-387, Cys-416, Cys-419, Cys-422, and Cys-426 each contribute to the [4Fe-4S] cluster site. The disordered stretch occupies residues 602 to 719 (KLEQQQANAE…PEEQVDPRKA (118 aa)).

It belongs to the 4Fe4S bacterial-type ferredoxin family. RnfC subfamily. As to quaternary structure, the complex is composed of six subunits: RsxA, RsxB, RsxC, RsxD, RsxE and RsxG. [4Fe-4S] cluster is required as a cofactor.

The protein localises to the cell inner membrane. Its function is as follows. Part of a membrane-bound complex that couples electron transfer with translocation of ions across the membrane. Required to maintain the reduced state of SoxR. The polypeptide is Ion-translocating oxidoreductase complex subunit C (Escherichia coli O6:H1 (strain CFT073 / ATCC 700928 / UPEC)).